The chain runs to 335 residues: Fructose-1,6-bisphosphatase class 1 (335 aa).

Mg(2+)-binding residues include Glu-93, Asp-117, Leu-119, and Asp-120. Substrate-binding positions include 120–123 (DGSS), Asn-213, Tyr-244, and Lys-274. Glu-280 serves as a coordination point for Mg(2+).

It belongs to the FBPase class 1 family. In terms of assembly, homotetramer. The cofactor is Mg(2+).

The protein localises to the cytoplasm. The catalysed reaction is beta-D-fructose 1,6-bisphosphate + H2O = beta-D-fructose 6-phosphate + phosphate. Its pathway is carbohydrate biosynthesis; gluconeogenesis. This Flavobacterium psychrophilum (strain ATCC 49511 / DSM 21280 / CIP 103535 / JIP02/86) protein is Fructose-1,6-bisphosphatase class 1.